The chain runs to 270 residues: Thymidylate synthase (270 aa).

DUMP contacts are provided by residues R28 and 133–134 (RR). The active-site Nucleophile is the C153. Residues 173 to 176 (RSAD), N184, and 214 to 216 (HIY) contribute to the dUMP site. Residue D176 coordinates (6R)-5,10-methylene-5,6,7,8-tetrahydrofolate. (6R)-5,10-methylene-5,6,7,8-tetrahydrofolate is bound at residue A269.

Belongs to the thymidylate synthase family. Bacterial-type ThyA subfamily. As to quaternary structure, homodimer.

The protein localises to the cytoplasm. It catalyses the reaction dUMP + (6R)-5,10-methylene-5,6,7,8-tetrahydrofolate = 7,8-dihydrofolate + dTMP. Its pathway is pyrimidine metabolism; dTTP biosynthesis. Its function is as follows. Catalyzes the reductive methylation of 2'-deoxyuridine-5'-monophosphate (dUMP) to 2'-deoxythymidine-5'-monophosphate (dTMP) while utilizing 5,10-methylenetetrahydrofolate (mTHF) as the methyl donor and reductant in the reaction, yielding dihydrofolate (DHF) as a by-product. This enzymatic reaction provides an intracellular de novo source of dTMP, an essential precursor for DNA biosynthesis. The polypeptide is Thymidylate synthase (Corynebacterium diphtheriae (strain ATCC 700971 / NCTC 13129 / Biotype gravis)).